A 373-amino-acid chain; its full sequence is Type 2 DNA topoisomerase 6 subunit A (373 aa).

The Topo IIA-type catalytic domain occupies 15-153 (QGDTLAKERL…FHMRPEEDGA (139 aa)). Tyr110 acts as the O-(5'-phospho-DNA)-tyrosine intermediate in catalysis. Residues Glu206 and Asp258 each coordinate Mg(2+).

This sequence belongs to the TOP6A family. Homodimer. Heterotetramer of two Top6A and two Top6B chains. Mg(2+) is required as a cofactor.

The catalysed reaction is ATP-dependent breakage, passage and rejoining of double-stranded DNA.. Functionally, relaxes both positive and negative superturns and exhibits a strong decatenase activity. This chain is Type 2 DNA topoisomerase 6 subunit A, found in Methanosarcina acetivorans (strain ATCC 35395 / DSM 2834 / JCM 12185 / C2A).